A 152-amino-acid polypeptide reads, in one-letter code: Lipoprotein signal peptidase (152 aa).

2 helical membrane-spanning segments follow: residues 55–75 (NKMW…VFYM) and 85–105 (LGIS…DRVF). Catalysis depends on residues Asp111 and Asp129. The chain crosses the membrane as a helical span at residues 124–144 (VFNIADSALCIGVVLIIIQTL).

Belongs to the peptidase A8 family.

It localises to the cell membrane. The enzyme catalyses Release of signal peptides from bacterial membrane prolipoproteins. Hydrolyzes -Xaa-Yaa-Zaa-|-(S,diacylglyceryl)Cys-, in which Xaa is hydrophobic (preferably Leu), and Yaa (Ala or Ser) and Zaa (Gly or Ala) have small, neutral side chains.. Its pathway is protein modification; lipoprotein biosynthesis (signal peptide cleavage). Functionally, this protein specifically catalyzes the removal of signal peptides from prolipoproteins. The polypeptide is Lipoprotein signal peptidase (Bacillus cereus (strain B4264)).